The chain runs to 320 residues: GDSL esterase/lipase At3g43570 (320 aa).

An N-terminal signal peptide occupies residues 1–19 (MKIQIIWLTLVLIVVEANA). The N-linked (GlcNAc...) asparagine glycan is linked to Asn-25. The active-site Nucleophile is the Ser-37. The N-linked (GlcNAc...) asparagine glycan is linked to Asn-287. Residues Asp-295 and His-298 contribute to the active site.

Belongs to the 'GDSL' lipolytic enzyme family.

It is found in the secreted. This Arabidopsis thaliana (Mouse-ear cress) protein is GDSL esterase/lipase At3g43570.